Reading from the N-terminus, the 159-residue chain is Xanthine dehydrogenase iron-sulfur-binding subunit (159 aa).

Residues 7–82 (ITIECTINGM…GKEIRTLEGE (76 aa)) form the 2Fe-2S ferredoxin-type domain. 3 residues coordinate [2Fe-2S] cluster: cysteine 44, cysteine 49, and cysteine 52.

As to quaternary structure, heterotrimer of XdhA, XdhB and XdhC. The cofactor is [2Fe-2S] cluster.

It participates in purine metabolism; hypoxanthine degradation; urate from hypoxanthine: step 1/2. Iron-sulfur subunit of the xanthine dehydrogenase complex. The sequence is that of Xanthine dehydrogenase iron-sulfur-binding subunit (xdhC) from Escherichia coli O157:H7.